Consider the following 106-residue polypeptide: uncharacterized protein (106 aa).

Residues 28 to 68 form a disordered region; it reads SSANEPKKLPNKKLVSTKSHTQVNREKSKNKDTYEDYSDSN. Over residues 50–61 the composition is skewed to basic and acidic residues; sequence VNREKSKNKDTY.

This is an uncharacterized protein from Acanthamoeba polyphaga (Amoeba).